A 464-amino-acid chain; its full sequence is MAPGLPTAMDRPHFIGIGGAGMSGIAKILAQRGAKVAGSDAKESETAEALRALGATVHIGHAAEHLADDATCVVVSSAIRADNPELARAAELGIPVVHRSDALARLMDGLRPIAVAGTHGKTTTTSMLAVSLSTLGLAPSYAIGGDLDAPGSNALHGEGDIFVAEADESDRSFHKYAPDVAIVLNVELDHHANYASMDEIYASFETFVDRITEGGTLVIAADHEGARELTRRVTASGVRVVTYGESADADVCVLSVTAQGLKSEVEVLLDGTELTFTVSVPGRHYAHNAVAALAAGVALGIPAADLASALAAYTGVKRRLQLKGEEAGVQVIDSYAHHPTEMTADLEAMRAAAGDARILVVFQPHLFSRTQELGKEMGQALALADASVVLDIYPAREDPIPGITSELIIEAARAAGADVTPVHDKAEVPSVIAGMARPGDLVLTMGAGDVTELGPRILDRLSKQ.

An ATP-binding site is contributed by 117-123 (GTHGKTT).

This sequence belongs to the MurCDEF family.

It localises to the cytoplasm. It catalyses the reaction UDP-N-acetyl-alpha-D-muramate + L-alanine + ATP = UDP-N-acetyl-alpha-D-muramoyl-L-alanine + ADP + phosphate + H(+). Its pathway is cell wall biogenesis; peptidoglycan biosynthesis. Functionally, cell wall formation. This is UDP-N-acetylmuramate--L-alanine ligase from Streptomyces avermitilis (strain ATCC 31267 / DSM 46492 / JCM 5070 / NBRC 14893 / NCIMB 12804 / NRRL 8165 / MA-4680).